The primary structure comprises 457 residues: UDP-N-acetylmuramate--L-alanine ligase (457 aa).

109–115 (GTDGKTT) serves as a coordination point for ATP.

This sequence belongs to the MurCDEF family.

Its subcellular location is the cytoplasm. It carries out the reaction UDP-N-acetyl-alpha-D-muramate + L-alanine + ATP = UDP-N-acetyl-alpha-D-muramoyl-L-alanine + ADP + phosphate + H(+). It functions in the pathway cell wall biogenesis; peptidoglycan biosynthesis. In terms of biological role, cell wall formation. The sequence is that of UDP-N-acetylmuramate--L-alanine ligase from Thermotoga neapolitana (strain ATCC 49049 / DSM 4359 / NBRC 107923 / NS-E).